We begin with the raw amino-acid sequence, 267 residues long: Serine acetyltransferase (267 aa).

The protein belongs to the transferase hexapeptide repeat family.

The protein resides in the cytoplasm. It catalyses the reaction L-serine + acetyl-CoA = O-acetyl-L-serine + CoA. Its pathway is amino-acid biosynthesis; L-cysteine biosynthesis; L-cysteine from L-serine: step 1/2. This is Serine acetyltransferase (cysE) from Haemophilus influenzae (strain ATCC 51907 / DSM 11121 / KW20 / Rd).